Consider the following 226-residue polypeptide: Ribosomal RNA small subunit methyltransferase G (226 aa).

S-adenosyl-L-methionine-binding positions include Gly-95, Leu-100, 146–147, and Arg-159; that span reads VE.

The protein belongs to the methyltransferase superfamily. RNA methyltransferase RsmG family.

It localises to the cytoplasm. The catalysed reaction is guanosine(527) in 16S rRNA + S-adenosyl-L-methionine = N(7)-methylguanosine(527) in 16S rRNA + S-adenosyl-L-homocysteine. Specifically methylates the N7 position of guanine in position 527 of 16S rRNA. This chain is Ribosomal RNA small subunit methyltransferase G, found in Acidovorax sp. (strain JS42).